The following is a 282-amino-acid chain: Benzoyl-CoA reductase subunit D (282 aa).

[4Fe-4S] cluster contacts are provided by cysteine 130 and cysteine 169.

Heterotetramer composed of A, B, C, and D subunits. Requires [4Fe-4S] cluster as cofactor.

It catalyses the reaction cyclohexa-1,5-diene-1-carbonyl-CoA + oxidized 2[4Fe-4S]-[ferredoxin] + 2 ADP + 2 phosphate = reduced 2[4Fe-4S]-[ferredoxin] + benzoyl-CoA + 2 ATP + 2 H2O. The catalysed reaction is 3-hydroxybenzoyl-CoA + AH2 + 2 ATP + 2 H2O = 3-hydroxycyclohexa-1,5-diene-1-carbonyl-CoA + A + 2 ADP + 2 phosphate + 2 H(+). Its function is as follows. Catalyzes the anaerobic reduction of benzoyl-CoA and 3-hydroxybenzoyl-CoA to form cyclohexa-1,5-diene-1-carbonyl-CoA and 3-hydroxycyclohexa-1,5-diene-1-carbonyl-CoA, respectively. The enzyme also reduces other benzoyl-CoA analogs with small substituents at the aromatic ring. This chain is Benzoyl-CoA reductase subunit D (bcrD), found in Thauera aromatica.